Reading from the N-terminus, the 167-residue chain is uncharacterized protein (167 aa).

A run of 2 helical transmembrane segments spans residues 96-115 (YVPAFIPLFAAYLTMFFNFY) and 119-138 (WGALSFAAGTIAAIVWIIAV).

It localises to the cell membrane. This is an uncharacterized protein from Bacillus subtilis (strain 168).